A 289-amino-acid polypeptide reads, in one-letter code: Glycine--tRNA ligase alpha subunit (289 aa).

Belongs to the class-II aminoacyl-tRNA synthetase family. Tetramer of two alpha and two beta subunits.

The protein resides in the cytoplasm. It catalyses the reaction tRNA(Gly) + glycine + ATP = glycyl-tRNA(Gly) + AMP + diphosphate. The polypeptide is Glycine--tRNA ligase alpha subunit (Rickettsia bellii (strain OSU 85-389)).